A 280-amino-acid chain; its full sequence is 4-diphosphocytidyl-2-C-methyl-D-erythritol kinase (280 aa).

The active site involves Lys-8. 91–101 (PVAAGLAGGSA) is an ATP binding site. Asp-133 is a catalytic residue.

The protein belongs to the GHMP kinase family. IspE subfamily.

The catalysed reaction is 4-CDP-2-C-methyl-D-erythritol + ATP = 4-CDP-2-C-methyl-D-erythritol 2-phosphate + ADP + H(+). The protein operates within isoprenoid biosynthesis; isopentenyl diphosphate biosynthesis via DXP pathway; isopentenyl diphosphate from 1-deoxy-D-xylulose 5-phosphate: step 3/6. In terms of biological role, catalyzes the phosphorylation of the position 2 hydroxy group of 4-diphosphocytidyl-2C-methyl-D-erythritol. The protein is 4-diphosphocytidyl-2-C-methyl-D-erythritol kinase of Clostridium acetobutylicum (strain ATCC 824 / DSM 792 / JCM 1419 / IAM 19013 / LMG 5710 / NBRC 13948 / NRRL B-527 / VKM B-1787 / 2291 / W).